The primary structure comprises 226 residues: Cytidylate kinase (226 aa).

12-20 is a binding site for ATP; the sequence is GPSGAGKGT.

The protein belongs to the cytidylate kinase family. Type 1 subfamily.

The protein resides in the cytoplasm. It carries out the reaction CMP + ATP = CDP + ADP. It catalyses the reaction dCMP + ATP = dCDP + ADP. This Xanthomonas campestris pv. campestris (strain 8004) protein is Cytidylate kinase.